Here is a 67-residue protein sequence, read N- to C-terminus: Small integral membrane protein 20 (67 aa).

The Mitochondrial matrix portion of the chain corresponds to 1–6 (MSRNLR). Residues 7 to 27 (TALIFGGFISLIGAAFYPIYF) traverse the membrane as a helical segment. Residues 28–67 (RPLMRLEEYKKEQAINRAGIVQEDVQPPGLKVWSDPFGRK) lie on the Mitochondrial intermembrane side of the membrane. Phenylalanine 64 carries the phenylalanine amide modification.

Component of the MITRAC (mitochondrial translation regulation assembly intermediate of cytochrome c oxidase complex) complex, the core components of this complex being COA3/MITRAC12 and COX14. Interacts with COA3/MITRAC12 and COX4I1. Directly interacts with newly synthesized MT-CO1/COX1. In terms of tissue distribution, expressed in the ovary, specifically in granulosa cells of follicles that have passed the primary stage and in oocytes (at protein level).

The protein localises to the mitochondrion inner membrane. It localises to the secreted. Functionally, component of the MITRAC (mitochondrial translation regulation assembly intermediate of cytochrome c oxidase complex) complex, that regulates cytochrome c oxidase assembly. Promotes the progression of complex assembly after the association of MT-CO1/COX1 with COX4I1 and COX6C. Chaperone-like assembly factor required to stabilize newly synthesized MT-CO1/COX1 and to prevent its premature turnover. Peptide involved in a broad spectrum of regulatory functions. Is a ligand for GPR173. As part of the reproductive cycle, it regulates gonadotropin-releasing hormone (GnRH) signaling in the hypothalamus and pituitary gland which augments the release of luteinizing hormone. Plays a protective role in memory retention through activation of GNRHR. Regulates the secretion of AVP by hypothalamic neurons. Plays a role in the transduction of the itch sensation. Induces anxiolytic effects, reducing behavior associated with anxiety. Regulates food intake as well as satiation and satiety. In the ovary, it regulates follicular growth by stimulating granulosa cell proliferation by increasing the expression of GPR173, CREB1, CYP19A1, KITLG, FSHR, and LHCGR. It also increases the production of estradiol (E2). In the heart, it regulates contractility and relaxation. It also plays a cardioprotective role during ischemia, where it activates the SAFE and RISK pathways. Stimulates the proliferation and differentiation of preadipocytes. In pancreatic islet cells, it induces proliferation of islet cells as well as the production of INS. This Homo sapiens (Human) protein is Small integral membrane protein 20 (SMIM20).